The following is an 855-amino-acid chain: Cell surface glycoprotein (855 aa).

Residues 1–22 (MTANKQVRAVLLAALMVFSVFA) form the signal peptide. 19 N-linked (GlcNAc...) asparagine glycosylation sites follow: Asn-78, Asn-83, Asn-108, Asn-167, Asn-174, Asn-187, Asn-203, Asn-227, Asn-230, Asn-313, Asn-363, Asn-441, Asn-548, Asn-588, Asn-608, Asn-620, Asn-642, Asn-656, and Asn-754. Over residues 782–802 (ETTTAAETTTTEESTETTTTE) the composition is skewed to low complexity. Residues 782–831 (ETTTAAETTTTEESTETTTTEESTEEPTETATATEEPTEEATEETTESST) are disordered. Acidic residues predominate over residues 817–827 (EPTEEATEETT). A helical membrane pass occupies residues 831–851 (TPGFGVVVALVALVAAALLAV). Residues 832 to 834 (PGF) carry the PGF sorting signal motif.

It belongs to the halobacterial S-layer protein family. Post-translationally, glycosylated. In terms of processing, cleaved by the archaeosortase ArtA at the C-terminus, with removal of a short hydrophobic segment. Lipidation.

The protein localises to the secreted. It localises to the cell wall. Its subcellular location is the S-layer. The protein resides in the cell membrane. Functionally, S-layer protein. The S-layer is a paracrystalline mono-layered assembly of proteins which coats the surface of the cell. In Haloferax gibbonsii, this protein is Cell surface glycoprotein.